The following is a 162-amino-acid chain: Small ribosomal subunit protein uS19 (162 aa).

A compositionally biased stretch (basic residues) spans 1-27 (MAKQKKFSGKGSARSKRKQNRKQVGPR). The interval 1–29 (MAKQKKFSGKGSARSKRKQNRKQVGPRRR) is disordered.

Belongs to the universal ribosomal protein uS19 family.

Its function is as follows. Protein S19 forms a complex with S13 that binds strongly to the 16S ribosomal RNA. This is Small ribosomal subunit protein uS19 from Methanococcus aeolicus (strain ATCC BAA-1280 / DSM 17508 / OCM 812 / Nankai-3).